Here is a 219-residue protein sequence, read N- to C-terminus: UPF0619 GPI-anchored membrane protein AFUA_3G00880 (219 aa).

An N-terminal signal peptide occupies residues 1 to 16; it reads MRFALTLTAFVGSVAA. N-linked (GlcNAc...) asparagine glycosylation occurs at Asn-85. Disordered regions lie at residues 107 to 144 and 160 to 205; these read SQQF…GTVS and SSTL…SLTV. Positions 114–144 are enriched in low complexity; sequence SSGSSTTSDSTSSASATGSASTSSSSTGTVS. A lipid anchor (GPI-like-anchor amidated asparagine) is attached at Asn-198. The propeptide at 199–219 is removed in mature form; the sequence is GAGSLTVPAGSLLLGLVALAL.

It belongs to the UPF0619 family. The GPI-like anchor contains a phosphoceramide lipid group. The anchor position has not been determined.

It localises to the cell membrane. This Aspergillus fumigatus (strain ATCC MYA-4609 / CBS 101355 / FGSC A1100 / Af293) (Neosartorya fumigata) protein is UPF0619 GPI-anchored membrane protein AFUA_3G00880.